The following is a 291-amino-acid chain: Phosphatidylglycerol--prolipoprotein diacylglyceryl transferase (291 aa).

The next 7 membrane-spanning stretches (helical) occupy residues 21–41, 60–80, 96–116, 130–150, 198–218, 225–245, and 260–280; these read VALH…MWLA, LLYA…VLFY, WDGG…MIIF, FIAP…FING, SQLY…NLFI, GAVS…VEFF, and ISMG…MMVW. Residue arginine 143 coordinates a 1,2-diacyl-sn-glycero-3-phospho-(1'-sn-glycerol).

The protein belongs to the Lgt family.

It localises to the cell inner membrane. It catalyses the reaction L-cysteinyl-[prolipoprotein] + a 1,2-diacyl-sn-glycero-3-phospho-(1'-sn-glycerol) = an S-1,2-diacyl-sn-glyceryl-L-cysteinyl-[prolipoprotein] + sn-glycerol 1-phosphate + H(+). It functions in the pathway protein modification; lipoprotein biosynthesis (diacylglyceryl transfer). Its function is as follows. Catalyzes the transfer of the diacylglyceryl group from phosphatidylglycerol to the sulfhydryl group of the N-terminal cysteine of a prolipoprotein, the first step in the formation of mature lipoproteins. This Salmonella agona (strain SL483) protein is Phosphatidylglycerol--prolipoprotein diacylglyceryl transferase.